A 281-amino-acid polypeptide reads, in one-letter code: Aspartate/glutamate leucyltransferase (281 aa).

It belongs to the R-transferase family. Bpt subfamily.

Its subcellular location is the cytoplasm. The enzyme catalyses N-terminal L-glutamyl-[protein] + L-leucyl-tRNA(Leu) = N-terminal L-leucyl-L-glutamyl-[protein] + tRNA(Leu) + H(+). It carries out the reaction N-terminal L-aspartyl-[protein] + L-leucyl-tRNA(Leu) = N-terminal L-leucyl-L-aspartyl-[protein] + tRNA(Leu) + H(+). In terms of biological role, functions in the N-end rule pathway of protein degradation where it conjugates Leu from its aminoacyl-tRNA to the N-termini of proteins containing an N-terminal aspartate or glutamate. This Paracoccus denitrificans (strain Pd 1222) protein is Aspartate/glutamate leucyltransferase.